A 388-amino-acid polypeptide reads, in one-letter code: S-adenosylmethionine synthase (388 aa).

ATP is bound at residue His16. A Mg(2+)-binding site is contributed by Asp18. Glu44 lines the K(+) pocket. Glu57 and Gln100 together coordinate L-methionine. Residues Gln100–Lys110 form a flexible loop region. ATP is bound by residues Asp167–Lys169, Arg233–Phe234, Asp242, Arg248–Lys249, Ala265, and Lys269. Residue Asp242 coordinates L-methionine. Lys273 serves as a coordination point for L-methionine.

Belongs to the AdoMet synthase family. As to quaternary structure, homotetramer; dimer of dimers. Requires Mg(2+) as cofactor. K(+) serves as cofactor.

It localises to the cytoplasm. It catalyses the reaction L-methionine + ATP + H2O = S-adenosyl-L-methionine + phosphate + diphosphate. The protein operates within amino-acid biosynthesis; S-adenosyl-L-methionine biosynthesis; S-adenosyl-L-methionine from L-methionine: step 1/1. Catalyzes the formation of S-adenosylmethionine (AdoMet) from methionine and ATP. The overall synthetic reaction is composed of two sequential steps, AdoMet formation and the subsequent tripolyphosphate hydrolysis which occurs prior to release of AdoMet from the enzyme. This is S-adenosylmethionine synthase from Polynucleobacter necessarius subsp. necessarius (strain STIR1).